We begin with the raw amino-acid sequence, 895 residues long: Eukaryotic translation initiation factor 3 subunit C (895 aa).

The disordered stretch occupies residues 1 to 108 (MSGFFRKVGD…DSDSEEEVKK (108 aa)). 2 stretches are compositionally biased toward acidic residues: residues 11-31 (SDSESDISSSEEELSELESGD) and 52-75 (DDSDSDDDDSDDDDQDSLDSDDDN). Residues 638-812 (FHMHINLELL…NVVSFHRLEL (175 aa)) form the PCI domain. Residues 838–860 (DAKLGEGKEQRSGAGGERGDREG) are compositionally biased toward basic and acidic residues. The interval 838-895 (DAKLGEGKEQRSGAGGERGDREGGQPGGRRERRGGSAARGRGRGRGRAQQFQALGQKV) is disordered. Low complexity predominate over residues 884 to 895 (RAQQFQALGQKV).

Belongs to the eIF-3 subunit C family. Component of the eukaryotic translation initiation factor 3 (eIF-3) complex.

It localises to the cytoplasm. In terms of biological role, component of the eukaryotic translation initiation factor 3 (eIF-3) complex, which is involved in protein synthesis of a specialized repertoire of mRNAs and, together with other initiation factors, stimulates binding of mRNA and methionyl-tRNAi to the 40S ribosome. The eIF-3 complex specifically targets and initiates translation of a subset of mRNAs involved in cell proliferation. This chain is Eukaryotic translation initiation factor 3 subunit C, found in Mycosarcoma maydis (Corn smut fungus).